The primary structure comprises 272 residues: Protein FAM210A (272 aa).

The DUF1279 domain maps to 117 to 229 (DKSISLYQRF…GYMSTPPPVK (113 aa)). A helical transmembrane segment spans residues 136–156 (VLIPVHLITSGVWFGTFYYAA). Residues 229 to 271 (KEYLQDRMEETKELITEKMEETKDRLTEKLQETKEKVSFKKKV) are a coiled coil. Residues 246 to 272 (KMEETKDRLTEKLQETKEKVSFKKKVE) are disordered.

This sequence belongs to the FAM210 family. As to quaternary structure, interacts with ATAD3A.

Its subcellular location is the membrane. The protein localises to the mitochondrion. It is found in the cytoplasm. May play a role in the structure and strength of both muscle and bone. This Homo sapiens (Human) protein is Protein FAM210A (FAM210A).